Consider the following 356-residue polypeptide: Histidinol-phosphate aminotransferase (356 aa).

Lys214 is modified (N6-(pyridoxal phosphate)lysine).

It belongs to the class-II pyridoxal-phosphate-dependent aminotransferase family. Histidinol-phosphate aminotransferase subfamily. In terms of assembly, homodimer. Pyridoxal 5'-phosphate is required as a cofactor.

It catalyses the reaction L-histidinol phosphate + 2-oxoglutarate = 3-(imidazol-4-yl)-2-oxopropyl phosphate + L-glutamate. It participates in amino-acid biosynthesis; L-histidine biosynthesis; L-histidine from 5-phospho-alpha-D-ribose 1-diphosphate: step 7/9. The polypeptide is Histidinol-phosphate aminotransferase (Shigella dysenteriae serotype 1 (strain Sd197)).